We begin with the raw amino-acid sequence, 1105 residues long: Mediator of RNA polymerase II transcription subunit 14 (1105 aa).

The tract at residues 28 to 48 (ASQQANGGIYRNGIGKKSHSP) is disordered.

Belongs to the Mediator complex subunit 14 family. As to quaternary structure, component of the Mediator complex.

It is found in the nucleus. Component of the Mediator complex, a coactivator involved in the regulated transcription of nearly all RNA polymerase II-dependent genes. Mediator functions as a bridge to convey information from gene-specific regulatory proteins to the basal RNA polymerase II transcription machinery. Mediator is recruited to promoters by direct interactions with regulatory proteins and serves as a scaffold for the assembly of a functional preinitiation complex with RNA polymerase II and the general transcription factors. The protein is Mediator of RNA polymerase II transcription subunit 14 (RGR1) of Coccidioides immitis (strain RS) (Valley fever fungus).